Consider the following 275-residue polypeptide: Large ribosomal subunit protein uL2cz (275 aa).

2 disordered regions span residues 1–20 and 225–275; these read MAIH…AVDS and NPVD…RRSK.

It belongs to the universal ribosomal protein uL2 family. Part of the 50S ribosomal subunit.

It is found in the plastid. Its subcellular location is the chloroplast. This chain is Large ribosomal subunit protein uL2cz (rpl2-A), found in Populus alba (White poplar).